The following is a 377-amino-acid chain: Glutamate 5-kinase (377 aa).

Lys-15 lines the ATP pocket. The substrate site is built by Ser-56, Asp-143, and Asn-155. ATP is bound at residue 175 to 176 (SD). One can recognise a PUA domain in the interval 281-358 (KGTLTIDAGA…PDVLIILGIS (78 aa)).

The protein belongs to the glutamate 5-kinase family.

It localises to the cytoplasm. The enzyme catalyses L-glutamate + ATP = L-glutamyl 5-phosphate + ADP. The protein operates within amino-acid biosynthesis; L-proline biosynthesis; L-glutamate 5-semialdehyde from L-glutamate: step 1/2. Catalyzes the transfer of a phosphate group to glutamate to form L-glutamate 5-phosphate. The sequence is that of Glutamate 5-kinase from Rhodopseudomonas palustris (strain BisA53).